The following is a 210-amino-acid chain: Putative odorant-binding protein A5 (210 aa).

A signal peptide spans 1 to 19; sequence MKLPALHLLFLGFICLARS.

The protein belongs to the phosphatidylethanolamine-binding protein family. As to expression, cells at the bases of a few scattered sensilla on the posterior surface of the antenna.

It is found in the secreted. This is Putative odorant-binding protein A5 (a5) from Drosophila melanogaster (Fruit fly).